A 271-amino-acid chain; its full sequence is Glutamate racemase (271 aa).

Residues 10–11 (DS) and 42–43 (YG) each bind substrate. The active-site Proton donor/acceptor is the Cys73. 74-75 (NS) is a binding site for substrate. Residue Cys183 is the Proton donor/acceptor of the active site. 184–185 (TH) contributes to the substrate binding site.

The protein belongs to the aspartate/glutamate racemases family.

The catalysed reaction is L-glutamate = D-glutamate. It functions in the pathway cell wall biogenesis; peptidoglycan biosynthesis. Functionally, provides the (R)-glutamate required for cell wall biosynthesis. The sequence is that of Glutamate racemase from Saccharopolyspora erythraea (strain ATCC 11635 / DSM 40517 / JCM 4748 / NBRC 13426 / NCIMB 8594 / NRRL 2338).